A 413-amino-acid chain; its full sequence is MYKLMKNIQTTALNRTTLMFPLALVLFEFAVYIGNDLIQPAMLAITEDFGVSATWAPSSMSFYLLGGASVAWLLGPLSDRLGRKKVLLSGVLFFALCCFLILLTRQIEHFLTLRFLQGIGLSVISAVGYAAIQENFAERDAIKVMALMANISLLAPLLGPVLGAFLIDYVSWHWGFVAIALLALLSWVGLKKQMPSHKVSVTKQPFSYLFDDFKKVFSNRQFLGLTLALPLVGMPLMLWIALSPIILVDELKLTSVQYGLAQFPVFLGLIVGNIVLIKIIDRLALGKTVLIGLPIMLTGTLILILGVVWQAYLIPCLLIGMTLICFGEGISFSVLYRFALMSSEVSKGTVAAAVSMLLMTSFFAMIELVRYLYTQFHLWAFVLSAFAFIALWFTQPRLALKREMQERVAQDLH.

12 helical membrane passes run 18-38 (LMFPLALVLFEFAVYIGNDLI), 55-75 (WAPSSMSFYLLGGASVAWLLG), 84-104 (KKVLLSGVLFFALCCFLILLT), 110-130 (FLTLRFLQGIGLSVISAVGYA), 147-167 (LMANISLLAPLLGPVLGAFLI), 170-190 (VSWHWGFVAIALLALLSWVGL), 228-248 (ALPLVGMPLMLWIALSPIILV), 260-280 (LAQFPVFLGLIVGNIVLIKII), 289-309 (VLIGLPIMLTGTLILILGVVW), 312-332 (YLIPCLLIGMTLICFGEGISF), 349-369 (TVAAAVSMLLMTSFFAMIELV), and 373-393 (YTQFHLWAFVLSAFAFIALWF).

This sequence belongs to the major facilitator superfamily.

It is found in the cell inner membrane. Functionally, efflux pump that mediates resistance to chloramphenicol. This is Chloramphenicol resistance protein CraA from Acinetobacter baumannii (strain ATCC 19606 / DSM 30007 / JCM 6841 / CCUG 19606 / CIP 70.34 / NBRC 109757 / NCIMB 12457 / NCTC 12156 / 81).